The sequence spans 204 residues: CASP-like protein 2A1 (204 aa).

The span at 1–11 (MEKSNDHDKAS) shows a compositional bias: basic and acidic residues. The segment at 1–25 (MEKSNDHDKASHGGSGGGATEKWEE) is disordered. Residues 1–32 (MEKSNDHDKASHGGSGGGATEKWEETSPGIRT) lie on the Cytoplasmic side of the membrane. A helical transmembrane segment spans residues 33–53 (AETMLRLAPVGLCVAALVVML). The Extracellular segment spans residues 54 to 74 (KDSETNEFGSISYSNLTAFRY). Asn-68 carries an N-linked (GlcNAc...) asparagine glycan. Residues 75 to 95 (LVHANGICAGYSLLSAAIAAM) traverse the membrane as a helical segment. Residues 96–113 (PRSSSTMPRVWTFFCLDQ) are Cytoplasmic-facing. A helical membrane pass occupies residues 114–134 (LLTYLVLAAGAVSAEVLYLAY). The Extracellular portion of the chain corresponds to 135–155 (NGDSAITWSDACSSYGGFCHR). Residues 156-176 (ATASVIITFFVVCFYILLSLI) form a helical membrane-spanning segment. Residues 177–204 (SSYKLFTRFDPPSIVDSDKTLEVAVFGS) lie on the Cytoplasmic side of the membrane.

It belongs to the Casparian strip membrane proteins (CASP) family. As to quaternary structure, homodimer and heterodimers.

The protein localises to the cell membrane. The chain is CASP-like protein 2A1 from Arabidopsis lyrata subsp. lyrata (Lyre-leaved rock-cress).